The following is a 542-amino-acid chain: Phosphoacetylglucosamine mutase (542 aa).

The residue at position 1 (M1) is an N-acetylmethionine. T62 carries the post-translational modification Phosphothreonine. S64 (phosphoserine intermediate) is an active-site residue. Mg(2+) is bound by residues S64, D276, D278, and D280. S64 is subject to Phosphoserine. Substrate is bound by residues 370–372 (EAN), 496–500 (RPSGT), and R505.

This sequence belongs to the phosphohexose mutase family. Mg(2+) serves as cofactor.

The catalysed reaction is N-acetyl-alpha-D-glucosamine 1-phosphate = N-acetyl-D-glucosamine 6-phosphate. It participates in nucleotide-sugar biosynthesis; UDP-N-acetyl-alpha-D-glucosamine biosynthesis; N-acetyl-alpha-D-glucosamine 1-phosphate from alpha-D-glucosamine 6-phosphate (route I): step 2/2. Inhibited by Mn(2+), Cd(2+), Zn(2+), Cu(2+) and Be(2+). Its function is as follows. Catalyzes the conversion of GlcNAc-6-P into GlcNAc-1-P during the synthesis of uridine diphosphate/UDP-GlcNAc, a sugar nucleotide critical to multiple glycosylation pathways including protein N- and O-glycosylation. This is Phosphoacetylglucosamine mutase from Sus scrofa (Pig).